The following is a 199-amino-acid chain: Single-stranded DNA-binding protein 2 (199 aa).

Residues 1 to 110 (MAGETVITVV…LDVDEVGASL (110 aa)) form the SSB domain. A disordered region spans residues 114 to 199 (TAKVTKTSGQ…GGGYSDEPPF (86 aa)). Positions 123 to 156 (QGRGGQGGYGGGGGGQGGGGWGGGPGGGQQGGGA) are enriched in gly residues. Residues 157–166 (PADDPWATGG) show a composition bias toward low complexity. The span at 167 to 193 (APAGGQQGGGGQGGGGWGGGSGGGGGY) shows a compositional bias: gly residues.

In terms of assembly, homotetramer. Phosphorylated on tyrosine residue(s) when expressed in E.coli.

It localises to the cytoplasm. The protein localises to the nucleoid. The polypeptide is Single-stranded DNA-binding protein 2 (ssb2) (Streptomyces coelicolor (strain ATCC BAA-471 / A3(2) / M145)).